Reading from the N-terminus, the 312-residue chain is Aspartate carbamoyltransferase catalytic subunit (312 aa).

Carbamoyl phosphate is bound by residues Arg58 and Thr59. Lys86 serves as a coordination point for L-aspartate. Residues Arg108, His136, and Gln139 each coordinate carbamoyl phosphate. L-aspartate contacts are provided by Arg169 and Arg223. Carbamoyl phosphate contacts are provided by Gly264 and Pro265.

Belongs to the aspartate/ornithine carbamoyltransferase superfamily. ATCase family. In terms of assembly, heterododecamer (2C3:3R2) of six catalytic PyrB chains organized as two trimers (C3), and six regulatory PyrI chains organized as three dimers (R2).

It catalyses the reaction carbamoyl phosphate + L-aspartate = N-carbamoyl-L-aspartate + phosphate + H(+). It participates in pyrimidine metabolism; UMP biosynthesis via de novo pathway; (S)-dihydroorotate from bicarbonate: step 2/3. Functionally, catalyzes the condensation of carbamoyl phosphate and aspartate to form carbamoyl aspartate and inorganic phosphate, the committed step in the de novo pyrimidine nucleotide biosynthesis pathway. In Heliobacterium modesticaldum (strain ATCC 51547 / Ice1), this protein is Aspartate carbamoyltransferase catalytic subunit.